Here is a 237-residue protein sequence, read N- to C-terminus: Ubiquinone biosynthesis O-methyltransferase (237 aa).

S-adenosyl-L-methionine contacts are provided by Arg38, Gly57, Asp78, and Met122.

Belongs to the methyltransferase superfamily. UbiG/COQ3 family.

The catalysed reaction is a 3-demethylubiquinol + S-adenosyl-L-methionine = a ubiquinol + S-adenosyl-L-homocysteine + H(+). It carries out the reaction a 3-(all-trans-polyprenyl)benzene-1,2-diol + S-adenosyl-L-methionine = a 2-methoxy-6-(all-trans-polyprenyl)phenol + S-adenosyl-L-homocysteine + H(+). The protein operates within cofactor biosynthesis; ubiquinone biosynthesis. In terms of biological role, O-methyltransferase that catalyzes the 2 O-methylation steps in the ubiquinone biosynthetic pathway. This Methylococcus capsulatus (strain ATCC 33009 / NCIMB 11132 / Bath) protein is Ubiquinone biosynthesis O-methyltransferase.